Reading from the N-terminus, the 91-residue chain is MEKQCSKFIVSGHVQGVGFRYHTSHQGLKLGLTGYAKNLNNGDVEVVACGTPERLEELYLWLQEGPKTASVRQVRRLSSELEHDYQGFEIL.

The Acylphosphatase-like domain occupies 5-91; sequence CSKFIVSGHV…EHDYQGFEIL (87 aa). Catalysis depends on residues R20 and N38.

The protein belongs to the acylphosphatase family.

It catalyses the reaction an acyl phosphate + H2O = a carboxylate + phosphate + H(+). This chain is Acylphosphatase (acyP), found in Vibrio cholerae serotype O1 (strain ATCC 39315 / El Tor Inaba N16961).